We begin with the raw amino-acid sequence, 254 residues long: MIKMSDFLKDCFQKIGWEKDHVSFGDLPLFLKAMAYRFPFENRAVLAKENYKITKEELWRRLLKDQHGGLCYDLNGFLYFVLREAGFHVKLIRGTVYAGDQEGWALEGTHAAVWLSAENGDYLVDIGFGINLALQPIPLSGETVQSPVGSFRIKKEETEKGSYVLLMDKGEGWQIGYAFTLEESDLGDLDNMKDIIHSHEKSPFNKSLLASKLTPSGRMVMSERHFTIYENGGNIQKSDIGPSGFEEKLNTHFL.

Cysteine 71 functions as the Acyl-thioester intermediate in the catalytic mechanism. Active-site residues include histidine 110 and aspartate 125.

Belongs to the arylamine N-acetyltransferase family.

This is an uncharacterized protein from Bacillus subtilis (strain 168).